The sequence spans 1038 residues: Fibronectin-binding protein A (1038 aa).

Residues 1–36 (MKNNLRYGIRKHKLGAASVFLGTMIVVGMGQDKEAA) form the signal peptide. Positions 7–18 (YGIRKHKLGAAS) match the YSIRK-G/S signaling motif motif. Positions 37–193 (ASEQKTTTVE…VSEVKGTDVT (157 aa)) are disordered. Residues 37-507 (ASEQKTTTVE…SNKADGNGKN (471 aa)) form a ligand-binding A region region. Polar residues predominate over residues 39–92 (EQKTTTVEENGNSATDNKTSETQTTATNVNHIEETQSYNATVTEQPSNATQVTT). Basic and acidic residues predominate over residues 112–121 (TVKEEEKPQV). The segment covering 122 to 164 (KETTQPQDNSGNQRQVDLTPKKVTQNQGTETQVEVAQPRTASE) has biased composition (polar residues). Positions 174–189 (DVAEAKEASDVSEVKG) are enriched in basic and acidic residues. A fibrinogen/elastin/tropoelastin-binding region spans residues 189-507 (GTDVTSKVTV…SNKADGNGKN (319 aa)). A fibronectin-binding region spans residues 508–868 (GQIIQDNDFE…EGQQTIEEDT (361 aa)). A B-1 repeat occupies 541–570 (ENQDNTPLDIDYHTAIDGEGGYVDGYIETI). The segment at 541–600 (ENQDNTPLDIDYHTAIDGEGGYVDGYIETIEETDSSAIDIDYHTAVDSEVGHVGGYTESS) is 2 X approximate tandem repeats. A B-2 repeat occupies 571–600 (EETDSSAIDIDYHTAVDSEVGHVGGYTESS). 3 disordered regions span residues 736-804 (LGYE…GGNI), 825-976 (IEED…GKVV), and 989-1015 (VAPT…NKGM). Residues 741–778 (GQNSGNQSFEEDTEEDKPKYEQGGNIVDIDFDSVPQIH) form a D-1 repeat. Residues 741-898 (GQNSGNQSFE…TPEVPSEPET (158 aa)) are 4 X approximate tandem repeats. One copy of the D-2 repeat lies at 779-816 (GQNKGDQSFEEDTEKDKPKYEHGGNIIDIDFDSVPQIH). The D-3 repeat unit spans residues 817-855 (GFNKHNEIIEEDTNKDKPNYQFGGHNSVDFEEDTLPKVS). A compositionally biased stretch (basic and acidic residues) spans 825–834 (IEEDTNKDKP). The stretch at 856–898 (GQNEGQQTIEEDTTPPTPPTPEVPSEPETPMPPTPEVPSEPET) is one D-4 repeat. Residues 870-958 (PPTPPTPEVP…PAEPGKPVPP (89 aa)) are compositionally biased toward pro residues. WR repeat units lie at residues 899 to 912 (PTPP…EPET), 913 to 926 (PTPP…EPET), 927 to 940 (PTPP…EPET), 941 to 954 (PTPP…EPGK), and 955 to 968 (PVPP…KPSK). Residues 899–968 (PTPPTPEVPS…AKEEPKKPSK (70 aa)) form a 5 X tandem repeats, Pro-rich (WR) region. The short motif at 1002–1006 (LPETG) is the LPXTG sorting signal element. Position 1005 is a pentaglycyl murein peptidoglycan amidated threonine (Thr-1005). A propeptide spans 1006–1038 (GGEESTNKGMLFGGLFSILGLALLRRNKKNNKA) (removed by sortase).

Its subcellular location is the secreted. It is found in the cell wall. In terms of biological role, promotes bacterial attachment to multiple substrates, such as fibronectin (Fn), fibrinogen (Fg), elastin peptides and tropoelastin. This confers to S.aureus the ability to invade endothelial cells. Promotes adherence to and aggregation of activated platelets. This Staphylococcus aureus (strain Mu50 / ATCC 700699) protein is Fibronectin-binding protein A (fnbA).